Here is a 450-residue protein sequence, read N- to C-terminus: Probable glycine dehydrogenase (decarboxylating) subunit 1 (450 aa).

Belongs to the GcvP family. N-terminal subunit subfamily. As to quaternary structure, the glycine cleavage system is composed of four proteins: P, T, L and H. In this organism, the P 'protein' is a heterodimer of two subunits.

It carries out the reaction N(6)-[(R)-lipoyl]-L-lysyl-[glycine-cleavage complex H protein] + glycine + H(+) = N(6)-[(R)-S(8)-aminomethyldihydrolipoyl]-L-lysyl-[glycine-cleavage complex H protein] + CO2. In terms of biological role, the glycine cleavage system catalyzes the degradation of glycine. The P protein binds the alpha-amino group of glycine through its pyridoxal phosphate cofactor; CO(2) is released and the remaining methylamine moiety is then transferred to the lipoamide cofactor of the H protein. The protein is Probable glycine dehydrogenase (decarboxylating) subunit 1 of Brevibacillus brevis (strain 47 / JCM 6285 / NBRC 100599).